A 297-amino-acid chain; its full sequence is N-acetylmuramic acid 6-phosphate etherase (297 aa).

Positions A55–K218 constitute an SIS domain. E83 acts as the Proton donor in catalysis. Residue E114 is part of the active site.

Belongs to the GCKR-like family. MurNAc-6-P etherase subfamily. In terms of assembly, homodimer.

The catalysed reaction is N-acetyl-D-muramate 6-phosphate + H2O = N-acetyl-D-glucosamine 6-phosphate + (R)-lactate. It functions in the pathway amino-sugar metabolism; 1,6-anhydro-N-acetylmuramate degradation. Its pathway is amino-sugar metabolism; N-acetylmuramate degradation. It participates in cell wall biogenesis; peptidoglycan recycling. Its function is as follows. Specifically catalyzes the cleavage of the D-lactyl ether substituent of MurNAc 6-phosphate, producing GlcNAc 6-phosphate and D-lactate. Together with AnmK, is also required for the utilization of anhydro-N-acetylmuramic acid (anhMurNAc) either imported from the medium or derived from its own cell wall murein, and thus plays a role in cell wall recycling. This is N-acetylmuramic acid 6-phosphate etherase from Enterobacter sp. (strain 638).